The sequence spans 169 residues: S-ribosylhomocysteine lyase (169 aa).

The Fe cation site is built by His-54, His-58, and Cys-128.

This sequence belongs to the LuxS family. As to quaternary structure, homodimer. Fe cation serves as cofactor.

The catalysed reaction is S-(5-deoxy-D-ribos-5-yl)-L-homocysteine = (S)-4,5-dihydroxypentane-2,3-dione + L-homocysteine. Involved in the synthesis of autoinducer 2 (AI-2) which is secreted by bacteria and is used to communicate both the cell density and the metabolic potential of the environment. The regulation of gene expression in response to changes in cell density is called quorum sensing. Catalyzes the transformation of S-ribosylhomocysteine (RHC) to homocysteine (HC) and 4,5-dihydroxy-2,3-pentadione (DPD). This Tolumonas auensis (strain DSM 9187 / NBRC 110442 / TA 4) protein is S-ribosylhomocysteine lyase.